The primary structure comprises 419 residues: Cytosine permease (419 aa).

Topologically, residues 1-19 are cytoplasmic; sequence MSQDNNFSQGPVPQSARKG. The chain crosses the membrane as a helical span at residues 20–39; that stretch reads VLALTFVMLGLTFFSASMWT. At 40–51 the chain is on the periplasmic side; that stretch reads GGTLGTGLSYHD. Residues 52–71 form a helical membrane-spanning segment; the sequence is FFLAVLIGNLLLGIYTSFLG. Residues 72–100 lie on the Cytoplasmic side of the membrane; sequence YIGAKTGLTTHLLARFSFGVKGSWLPSLL. Residues 101–120 traverse the membrane as a helical segment; sequence LGGTQVGWFGVGVAMFAIPV. Residues 121 to 127 lie on the Periplasmic side of the membrane; sequence GKATGLD. The helical transmembrane segment at 128–147 threads the bilayer; it reads INLLIAVSGLLMTVTVFFGI. The Cytoplasmic portion of the chain corresponds to 148 to 152; that stretch reads SALTV. The helical transmembrane segment at 153-172 threads the bilayer; it reads LSLIAVPAIACLGGYSVWLA. The Periplasmic portion of the chain corresponds to 173–192; it reads VNGMGGLDALKAVVPAQPLD. Residues 193–212 form a helical membrane-spanning segment; sequence FNVALALVVGSFISAGTLTA. The Cytoplasmic segment spans residues 213 to 221; sequence DFVRFGRNA. Residues 222–242 traverse the membrane as a helical segment; the sequence is KLAVLVAMVAFFLGNSLMFIF. Residues 243-257 lie on the Periplasmic side of the membrane; that stretch reads GAAGAAALGMADISD. Residues 258–277 form a helical membrane-spanning segment; that stretch reads VMIAQGLLLPAIVVLGLNIW. Over 278-300 the chain is Cytoplasmic; the sequence is TTNDNALYASGLGFANITGMSSK. Residues 301-320 traverse the membrane as a helical segment; that stretch reads TLSVINGIIGTVCALWLYNN. Position 321 (phenylalanine 321) is a topological domain, periplasmic. Residues 322 to 341 traverse the membrane as a helical segment; the sequence is VGWLTFLSAAIPPVGGVIIA. Over 342–358 the chain is Cytoplasmic; sequence DYLMNRRRYEHFATTRM. The chain crosses the membrane as a helical span at residues 359–378; that stretch reads MSVNWVAILAVALGIAAGHW. At 379–380 the chain is on the periplasmic side; it reads LP. Residues 381-400 form a helical membrane-spanning segment; that stretch reads GIVPVNAVLGGALSYLILNP. At 401–419 the chain is on the cytoplasmic side; sequence ILNRKTTAAMTHVEANSVE.

It belongs to the purine-cytosine permease (2.A.39) family.

The protein localises to the cell inner membrane. In terms of biological role, required for cytosine transport into the cell. The polypeptide is Cytosine permease (codB) (Escherichia coli O157:H7).